The sequence spans 186 residues: MQPTHTLTRLTVIGKLIIASSFFLSLAVQAQQCGQTAPLINERLSYMKDVAGYKAENHLPIEDRIQEEKVINSAMAQAESLGLNGESIKPLMVAQINAAKAIQYRYRADWLSQPEPGWQPKPLDDVRANIGELSTKILEQIAEELKTCKPAEMGDKAHFINTIRQHNLTSADVEAIFSTFNQVKLK.

A signal peptide spans 1 to 30 (MQPTHTLTRLTVIGKLIIASSFFLSLAVQA). The 77-residue stretch at 31-107 (QQCGQTAPLI…AAKAIQYRYR (77 aa)) folds into the Chorismate mutase domain. A disulfide bond links C33 and C148. Substrate contacts are provided by residues R43, K54, D63, 99-103 (AKAIQ), and R127.

Homodimer.

It localises to the periplasm. The catalysed reaction is chorismate = prephenate. The protein operates within metabolic intermediate biosynthesis; prephenate biosynthesis; prephenate from chorismate: step 1/1. Catalyzes the Claisen rearrangement of chorismate to prephenate. May play some role in the pathogenicity. The chain is Secreted chorismate mutase (pheA2) from Yersinia pestis.